Here is a 365-residue protein sequence, read N- to C-terminus: Peptide chain release factor 2 (365 aa).

At Gln-249 the chain carries N5-methylglutamine.

This sequence belongs to the prokaryotic/mitochondrial release factor family. Post-translationally, methylated by PrmC. Methylation increases the termination efficiency of RF2.

Its subcellular location is the cytoplasm. Its function is as follows. Peptide chain release factor 2 directs the termination of translation in response to the peptide chain termination codons UGA and UAA. The polypeptide is Peptide chain release factor 2 (Acholeplasma laidlawii (strain PG-8A)).